The chain runs to 271 residues: MLATSDLWFRYQNEPVLKGLNMDFSLSPVTGLVGANGCGKSTLFMNLSGLLRPQKGAVLWQGKPLDYSKRGLLALRQQVATVFQDPEQQIFYTDIDSDIAFSLRNLGVPEAEITRRVDEALTLVDAQHFRHQPIQCLSHGQKKRVAIAGALVLQARYLLLDEPTAGLDPAGRTQMIAIIRRIVAQGNHVIISSHDIDLIYEISDAVYVLRQGQILTHGAPGEVFACTEAMEHAGLTQPWLVKLHTQLGLPLCKTETEFFHRMQKCAFREAS.

The ABC transporter domain occupies 2–236 (LATSDLWFRY…TEAMEHAGLT (235 aa)). An ATP-binding site is contributed by 34–41 (GANGCGKS).

It belongs to the ABC transporter superfamily. Cobalt importer (TC 3.A.1.18.1) family. As to quaternary structure, forms an energy-coupling factor (ECF) transporter complex composed of an ATP-binding protein (A component, CbiO), a transmembrane protein (T component, CbiQ) and 2 possible substrate-capture proteins (S components, CbiM and CbiN) of unknown stoichimetry. Expression of just CbiMN in E.coli confers some cobalt uptake.

The protein resides in the cell inner membrane. The protein operates within cofactor biosynthesis; adenosylcobalamin biosynthesis. Part of the energy-coupling factor (ECF) transporter complex CbiMNOQ involved in cobalt import. The complex confers cobalt uptake upon expression in E.coli; can also transport nickel with a very low affinity. Presumably responsible for energy coupling to the transport system. The protein is Cobalt import ATP-binding protein CbiO of Salmonella typhimurium (strain LT2 / SGSC1412 / ATCC 700720).